The following is a 261-amino-acid chain: 1-(5-phosphoribosyl)-5-[(5-phosphoribosylamino)methylideneamino] imidazole-4-carboxamide isomerase (261 aa).

Aspartate 7 serves as the catalytic Proton acceptor. Aspartate 129 (proton donor) is an active-site residue.

Belongs to the HisA/HisF family.

The protein resides in the cytoplasm. It catalyses the reaction 1-(5-phospho-beta-D-ribosyl)-5-[(5-phospho-beta-D-ribosylamino)methylideneamino]imidazole-4-carboxamide = 5-[(5-phospho-1-deoxy-D-ribulos-1-ylimino)methylamino]-1-(5-phospho-beta-D-ribosyl)imidazole-4-carboxamide. It functions in the pathway amino-acid biosynthesis; L-histidine biosynthesis; L-histidine from 5-phospho-alpha-D-ribose 1-diphosphate: step 4/9. This is 1-(5-phosphoribosyl)-5-[(5-phosphoribosylamino)methylideneamino] imidazole-4-carboxamide isomerase from Colwellia psychrerythraea (strain 34H / ATCC BAA-681) (Vibrio psychroerythus).